Reading from the N-terminus, the 336-residue chain is Anthranilate phosphoribosyltransferase (336 aa).

Residues G78, 81-82 (GD), T86, 88-91 (NVST), 106-114 (KHGNYSVSS), and S118 contribute to the 5-phospho-alpha-D-ribose 1-diphosphate site. G78 is a binding site for anthranilate. Mg(2+) is bound at residue S90. N109 contacts anthranilate. R164 provides a ligand contact to anthranilate. D222 and E223 together coordinate Mg(2+).

The protein belongs to the anthranilate phosphoribosyltransferase family. As to quaternary structure, homodimer. Requires Mg(2+) as cofactor.

It catalyses the reaction N-(5-phospho-beta-D-ribosyl)anthranilate + diphosphate = 5-phospho-alpha-D-ribose 1-diphosphate + anthranilate. Its pathway is amino-acid biosynthesis; L-tryptophan biosynthesis; L-tryptophan from chorismate: step 2/5. Its function is as follows. Catalyzes the transfer of the phosphoribosyl group of 5-phosphorylribose-1-pyrophosphate (PRPP) to anthranilate to yield N-(5'-phosphoribosyl)-anthranilate (PRA). This is Anthranilate phosphoribosyltransferase from Halobacterium salinarum (strain ATCC 29341 / DSM 671 / R1).